The following is a 68-amino-acid chain: MGMRMMFTVFLLVVLATTVVSFTSDRASEGRNAAAKDKASDLVALTVRGCCAIRECRLQNAAYCGGIY.

The first 21 residues, 1-21 (MGMRMMFTVFLLVVLATTVVS), serve as a signal peptide directing secretion. The propeptide occupies 22-48 (FTSDRASEGRNAAAKDKASDLVALTVR). Cystine bridges form between Cys-50-Cys-56 and Cys-51-Cys-64. A lacks the Ser-Xaa-Pro motif that is crucial for potent interaction with nAChR region spans residues 52–54 (AIR). The residue at position 63 (Tyr-63) is a Sulfotyrosine. The residue at position 64 (Cys-64) is a Cysteine amide. Positions 65-68 (GGIY) are excised as a propeptide.

Belongs to the conotoxin A superfamily. Expressed by the venom duct.

Its subcellular location is the secreted. Functionally, alpha-conotoxins act on postsynaptic membranes, they bind to the nicotinic acetylcholine receptors (nAChR) and thus inhibit them. Has possibly a distinct nAChR binding mode from other alpha-conotoxins, due to a different three residue motif (lacks the Ser-Xaa-Pro motif). The polypeptide is Alpha-conotoxin-like Ca1.2 (Conus caracteristicus (Characteristic cone)).